The following is a 635-amino-acid chain: Cilia- and flagella-associated protein 206 (635 aa).

It belongs to the CFAP206 family.

It localises to the cytoplasm. The protein resides in the cytoskeleton. It is found in the cilium axoneme. Functionally, may regulate cilium motility through its role in the assembly of the axonemal RS2 radial spoke. In Tetrahymena thermophila (strain SB210), this protein is Cilia- and flagella-associated protein 206.